Here is a 125-residue protein sequence, read N- to C-terminus: Small ribosomal subunit protein uS13 (125 aa).

Positions 99–125 (RGQRTKTNARTRKGKRKTVANKKMAAK) are disordered.

Belongs to the universal ribosomal protein uS13 family. Part of the 30S ribosomal subunit. Forms a loose heterodimer with protein S19. Forms two bridges to the 50S subunit in the 70S ribosome.

Functionally, located at the top of the head of the 30S subunit, it contacts several helices of the 16S rRNA. In the 70S ribosome it contacts the 23S rRNA (bridge B1a) and protein L5 of the 50S subunit (bridge B1b), connecting the 2 subunits; these bridges are implicated in subunit movement. Contacts the tRNAs in the A and P-sites. In Borrelia turicatae (strain 91E135), this protein is Small ribosomal subunit protein uS13.